The chain runs to 344 residues: Heat-inducible transcription repressor HrcA (344 aa).

This sequence belongs to the HrcA family.

Its function is as follows. Negative regulator of class I heat shock genes (grpE-dnaK-dnaJ and groELS operons). Prevents heat-shock induction of these operons. This is Heat-inducible transcription repressor HrcA from Streptococcus pyogenes serotype M1.